The following is a 123-amino-acid chain: Probable cytochrome c 2.2 (123 aa).

The segment at 1-21 is disordered; sequence MGKKKSDTASGGAIPEGDNEK. The heme c site is built by Cys-30, Cys-33, His-34, and Met-95.

The protein belongs to the cytochrome c family. In terms of processing, binds 1 heme c group covalently per subunit.

The protein resides in the mitochondrion intermembrane space. Electron carrier protein. The oxidized form of the cytochrome c heme group can accept an electron from the heme group of the cytochrome c1 subunit of cytochrome reductase. Cytochrome c then transfers this electron to the cytochrome oxidase complex, the final protein carrier in the mitochondrial electron-transport chain. This is Probable cytochrome c 2.2 (cyc-2.2) from Caenorhabditis elegans.